The primary structure comprises 917 residues: Catenin alpha (917 aa).

Phosphothreonine is present on residues Thr643 and Thr645. A phosphoserine mark is found at Ser659 and Ser662. Positions 878–890 (PLVRPEKPEEVRA) are enriched in basic and acidic residues. A disordered region spans residues 878–905 (PLVRPEKPEEVRAKVRKGSQKKVQNPIH).

This sequence belongs to the vinculin/alpha-catenin family. As to quaternary structure, interacts with arm/armadillo protein. Rapidly phosphorylated by CK2 and more slowly by CK1.

Its subcellular location is the cytoplasm. The protein localises to the cytoskeleton. It is found in the cell junction. It localises to the adherens junction. The protein resides in the cell membrane. Functionally, associates with the cytoplasmic domain of a variety of cadherins. The association of catenins to cadherins produces a complex which is linked to the actin filament network, and which seems to be of primary importance for cadherins cell-adhesion properties. The polypeptide is Catenin alpha (Drosophila melanogaster (Fruit fly)).